Here is a 64-residue protein sequence, read N- to C-terminus: DNA-binding protein 7d (64 aa).

N6-methyllysine is present on residues K5, K7, K61, K63, and K64.

Belongs to the 7 kDa DNA-binding/endoribonuclease P2 family. As to quaternary structure, monomer.

It is found in the cytoplasm. Can constrain negative DNA supercoils. May be involved in maintaining the integrity of the genome at high temperature. Stimulates the Holliday junction cleavage activity of Hjc. The polypeptide is DNA-binding protein 7d (sso7d) (Saccharolobus solfataricus (strain ATCC 35092 / DSM 1617 / JCM 11322 / P2) (Sulfolobus solfataricus)).